The sequence spans 740 residues: Ion-translocating oxidoreductase complex subunit C (740 aa).

4Fe-4S ferredoxin-type domains lie at glycine 369–tyrosine 397 and lysine 407–phenylalanine 436. Positions 377, 380, 383, 387, 416, 419, 422, and 426 each coordinate [4Fe-4S] cluster. Disordered regions lie at residues lysine 602–alanine 621 and alanine 660–alanine 718. The span at lysine 611–alanine 621 shows a compositional bias: basic and acidic residues.

It belongs to the 4Fe4S bacterial-type ferredoxin family. RnfC subfamily. As to quaternary structure, the complex is composed of six subunits: RsxA, RsxB, RsxC, RsxD, RsxE and RsxG. Requires [4Fe-4S] cluster as cofactor.

It is found in the cell inner membrane. Functionally, part of a membrane-bound complex that couples electron transfer with translocation of ions across the membrane. Required to maintain the reduced state of SoxR. The sequence is that of Ion-translocating oxidoreductase complex subunit C from Escherichia coli O9:H4 (strain HS).